Reading from the N-terminus, the 151-residue chain is Regulatory protein RecX (151 aa).

The protein belongs to the RecX family.

It is found in the cytoplasm. In terms of biological role, modulates RecA activity. The polypeptide is Regulatory protein RecX (Haemophilus ducreyi (strain 35000HP / ATCC 700724)).